The sequence spans 877 residues: Probable alpha/beta-glucosidase agdC (877 aa).

Residues 1 to 14 (MLGSLLLLAPLAGA) form the signal peptide. N-linked (GlcNAc...) asparagine glycosylation is found at asparagine 171, asparagine 293, and asparagine 373. Aspartate 422 acts as the Nucleophile in catalysis. Residue glutamate 425 is part of the active site. Residues 432–476 (DPCTDPERYSSENNLPPAPPPVRSSSPRPLPGFPADFQPSSASRS) are disordered. The segment covering 447-463 (PPAPPPVRSSSPRPLPG) has biased composition (pro residues). N-linked (GlcNAc...) asparagine glycosylation is present at asparagine 508. Residue aspartate 573 is the Proton donor of the active site. 3 N-linked (GlcNAc...) asparagine glycosylation sites follow: asparagine 574, asparagine 610, and asparagine 744.

The protein belongs to the glycosyl hydrolase 31 family.

It is found in the secreted. The enzyme catalyses Hydrolysis of terminal, non-reducing (1-&gt;4)-linked alpha-D-glucose residues with release of alpha-D-glucose.. It carries out the reaction Hydrolysis of terminal, non-reducing beta-D-glucosyl residues with release of beta-D-glucose.. In terms of biological role, glucosidase involved in the degradation of cellulosic biomass. Has both alpha- and beta-glucosidase activity. The polypeptide is Probable alpha/beta-glucosidase agdC (agdC) (Aspergillus flavus (strain ATCC 200026 / FGSC A1120 / IAM 13836 / NRRL 3357 / JCM 12722 / SRRC 167)).